Reading from the N-terminus, the 623-residue chain is Chaperone protein HtpG (623 aa).

The tract at residues 1 to 328 (MTQEKKKFDA…SEDLPLNISR (328 aa)) is a; substrate-binding. The b stretch occupies residues 329–544 (ESLQHNSILD…ESAMDIRMER (216 aa)). The tract at residues 545–623 (FLIEQKQIAN…DIVQKAILSL (79 aa)) is c.

Belongs to the heat shock protein 90 family. In terms of assembly, homodimer.

The protein resides in the cytoplasm. Functionally, molecular chaperone. Has ATPase activity. The sequence is that of Chaperone protein HtpG from Rickettsia canadensis (strain McKiel).